The primary structure comprises 145 residues: Basic phospholipase A2 cPm05 (145 aa).

Positions 1-21 are cleaved as a signal peptide; that stretch reads MYPAHLLVLLAVCISLLGASA. A propeptide spanning residues 22–27 is cleaved from the precursor; it reads IPPLPL. 7 disulfide bridges follow: Cys-38–Cys-98, Cys-54–Cys-144, Cys-56–Cys-72, Cys-71–Cys-125, Cys-78–Cys-118, Cys-87–Cys-111, and Cys-105–Cys-116. Positions 55, 57, and 59 each coordinate Ca(2+). The active site involves His-75. Asp-76 provides a ligand contact to Ca(2+). The active site involves Asp-119.

It belongs to the phospholipase A2 family. Group I subfamily. D49 sub-subfamily. Ca(2+) is required as a cofactor. In terms of tissue distribution, expressed by the venom gland.

The protein localises to the secreted. It carries out the reaction a 1,2-diacyl-sn-glycero-3-phosphocholine + H2O = a 1-acyl-sn-glycero-3-phosphocholine + a fatty acid + H(+). Functionally, PLA2 catalyzes the calcium-dependent hydrolysis of the 2-acyl groups in 3-sn-phosphoglycerides. This is Basic phospholipase A2 cPm05 from Laticauda semifasciata (Black-banded sea krait).